We begin with the raw amino-acid sequence, 102 residues long: uncharacterized protein (102 aa).

This is an uncharacterized protein from Escherichia coli (Bacteriophage T4).